The following is a 177-amino-acid chain: Pyruvate synthase subunit PorC (177 aa).

Heterotetramer of one alpha, one beta, one delta and one gamma chain.

It catalyses the reaction 2 oxidized [2Fe-2S]-[ferredoxin] + pyruvate + CoA = 2 reduced [2Fe-2S]-[ferredoxin] + acetyl-CoA + CO2 + H(+). This Methanothermobacter marburgensis (strain ATCC BAA-927 / DSM 2133 / JCM 14651 / NBRC 100331 / OCM 82 / Marburg) (Methanobacterium thermoautotrophicum) protein is Pyruvate synthase subunit PorC (porC).